The following is a 480-amino-acid chain: Chromosomal replication initiator protein DnaA (480 aa).

Residues 1-71 (MRHDALFERV…TTLVQQEDSE (71 aa)) are domain I, interacts with DnaA modulators. The interval 71-137 (EILKVEILVR…RPVQAPLFGS (67 aa)) is domain II. The domain III, AAA+ region stretch occupies residues 138 to 360 (PLDQRYGFDS…GAFNQLLFRR (223 aa)). ATP is bound by residues Gly-184, Gly-186, Lys-187, and Thr-188. The interval 361–480 (SFEPQLSIER…IELLKRLINE (120 aa)) is domain IV, binds dsDNA.

It belongs to the DnaA family. Oligomerizes as a right-handed, spiral filament on DNA at oriC.

The protein localises to the cytoplasm. Plays an essential role in the initiation and regulation of chromosomal replication. ATP-DnaA binds to the origin of replication (oriC) to initiate formation of the DNA replication initiation complex once per cell cycle. Binds the DnaA box (a 9 base pair repeat at the origin) and separates the double-stranded (ds)DNA. Forms a right-handed helical filament on oriC DNA; dsDNA binds to the exterior of the filament while single-stranded (ss)DNA is stabiized in the filament's interior. The ATP-DnaA-oriC complex binds and stabilizes one strand of the AT-rich DNA unwinding element (DUE), permitting loading of DNA polymerase. After initiation quickly degrades to an ADP-DnaA complex that is not apt for DNA replication. Binds acidic phospholipids. The polypeptide is Chromosomal replication initiator protein DnaA (Rhizobium meliloti (strain 1021) (Ensifer meliloti)).